The sequence spans 157 residues: Endoribonuclease YbeY (157 aa).

Zn(2+) is bound by residues histidine 116, histidine 120, and histidine 126.

It belongs to the endoribonuclease YbeY family. Zn(2+) serves as cofactor.

Its subcellular location is the cytoplasm. Its function is as follows. Single strand-specific metallo-endoribonuclease involved in late-stage 70S ribosome quality control and in maturation of the 3' terminus of the 16S rRNA. In Paenarthrobacter aurescens (strain TC1), this protein is Endoribonuclease YbeY.